A 529-amino-acid polypeptide reads, in one-letter code: Beta-glucosidase 11 (529 aa).

The first 25 residues, 1–25 (MAVAGAMVMSGALLLLHLLAFTCVA), serve as a signal peptide directing secretion. Residues Gln54, His157, and 202–203 (NE) contribute to the a beta-D-glucoside site. Glu203 functions as the Proton donor in the catalytic mechanism. Cys222 and Cys230 form a disulfide bridge. Tyr346 serves as a coordination point for a beta-D-glucoside. The N-linked (GlcNAc...) asparagine glycan is linked to Asn361. An a beta-D-glucoside-binding site is contributed by Glu417. Catalysis depends on Glu417, which acts as the Nucleophile. Asn425 is a glycosylation site (N-linked (GlcNAc...) asparagine). A beta-D-glucoside contacts are provided by residues Trp466, 473–474 (EW), and Phe482.

It belongs to the glycosyl hydrolase 1 family.

The enzyme catalyses Hydrolysis of terminal, non-reducing beta-D-glucosyl residues with release of beta-D-glucose.. This chain is Beta-glucosidase 11 (BGLU11), found in Oryza sativa subsp. japonica (Rice).